A 338-amino-acid polypeptide reads, in one-letter code: DNA-directed RNA polymerase subunit alpha (338 aa).

An alpha N-terminal domain (alpha-NTD) region spans residues Met1–Asn225. An alpha C-terminal domain (alpha-CTD) region spans residues Thr240–Glu338. Positions Leu319–Glu338 are disordered.

Belongs to the RNA polymerase alpha chain family. In terms of assembly, homodimer. The RNAP catalytic core consists of 2 alpha, 1 beta, 1 beta' and 1 omega subunit. When a sigma factor is associated with the core the holoenzyme is formed, which can initiate transcription.

It carries out the reaction RNA(n) + a ribonucleoside 5'-triphosphate = RNA(n+1) + diphosphate. Its function is as follows. DNA-dependent RNA polymerase catalyzes the transcription of DNA into RNA using the four ribonucleoside triphosphates as substrates. The sequence is that of DNA-directed RNA polymerase subunit alpha from Corynebacterium glutamicum (strain R).